The following is a 33-amino-acid chain: Brevinin-2LT (33 aa).

C27 and C33 are joined by a disulfide.

In terms of tissue distribution, expressed by the skin glands.

Its subcellular location is the secreted. Functionally, has antibacterial activity. The chain is Brevinin-2LT from Rana latastei (Italian agile frog).